Here is a 358-residue protein sequence, read N- to C-terminus: Reverse gyrase subunit A (358 aa).

One can recognise a Topo IA-type catalytic domain in the interval 1–351 (MNATLRIRNR…KLYLELERVV (351 aa)). Tyr-78 acts as the O-(5'-phospho-DNA)-tyrosine intermediate in catalysis.

It belongs to the type IA topoisomerase family. Heterodimer of an RgyrA and RgyrB subunit. The topoisomerase domain is shared between the two subunits. It depends on Mg(2+) as a cofactor.

It is found in the cytoplasm. Functionally, modifies the topological state of DNA by introducing positive supercoils in an ATP-dependent process; dATP also allows positive supercoiling. Increases the linking number in steps of +1. Only this subunit binds DNA, in isolation it does not hydrolyze ATP. Hydrolyzes ATP only in the presence of DNA. Transiently cleaves a single DNA strand and remains covalently bound to the 5' DNA end probably through a tyrosine residue. It changes linking number in steps of one, and nicks DNA preferentially at 5'-CNNN | 3'-sites with a strong preference for 4 pyrimidine residues. There are about 1000 heterodimers per cell. May be involved in rewinding the DNA strands in the regions of the chromosome that have opened up to allow transcription or replication. In terms of biological role, reverse gyrase activity is reconstituted after incubation at 80 degrees Celsius for 5 minutes, positive supercoiling requires ATP and Mg(2+). In the presence of ATP it binds and nicks substrate but does not make closed product. The protein is Reverse gyrase subunit A of Methanopyrus kandleri (strain AV19 / DSM 6324 / JCM 9639 / NBRC 100938).